Reading from the N-terminus, the 331-residue chain is D-alanine--D-alanine ligase (331 aa).

The ATP-grasp domain occupies 122 to 328 (KLWYDAIGIP…FHEFLADCIE (207 aa)). 152–207 (AFDKWGKLFVKAARQGSSVGCYSVTKIEQLSDAIDKAFGFSHQVLVEKAVKPRELE) is an ATP binding site. Positions 282, 295, and 297 each coordinate Mg(2+).

It belongs to the D-alanine--D-alanine ligase family. Mg(2+) is required as a cofactor. The cofactor is Mn(2+).

The protein resides in the cytoplasm. The enzyme catalyses 2 D-alanine + ATP = D-alanyl-D-alanine + ADP + phosphate + H(+). Its pathway is cell wall biogenesis; peptidoglycan biosynthesis. In terms of biological role, cell wall formation. In Vibrio vulnificus (strain CMCP6), this protein is D-alanine--D-alanine ligase.